The sequence spans 247 residues: Phosphoribosylaminoimidazole-succinocarboxamide synthase (247 aa).

It belongs to the SAICAR synthetase family.

The catalysed reaction is 5-amino-1-(5-phospho-D-ribosyl)imidazole-4-carboxylate + L-aspartate + ATP = (2S)-2-[5-amino-1-(5-phospho-beta-D-ribosyl)imidazole-4-carboxamido]succinate + ADP + phosphate + 2 H(+). The protein operates within purine metabolism; IMP biosynthesis via de novo pathway; 5-amino-1-(5-phospho-D-ribosyl)imidazole-4-carboxamide from 5-amino-1-(5-phospho-D-ribosyl)imidazole-4-carboxylate: step 1/2. The polypeptide is Phosphoribosylaminoimidazole-succinocarboxamide synthase (Synechococcus sp. (strain JA-2-3B'a(2-13)) (Cyanobacteria bacterium Yellowstone B-Prime)).